The primary structure comprises 555 residues: CCR4-NOT transcription complex subunit 6-like (555 aa).

The tract at residues 1–152 is required for interaction with CNOT1, CNOT3 and CNOT7; it reads MRLIGMPKEK…SLYQDPDGTR (152 aa). LRR repeat units lie at residues 57 to 78, 80 to 101, 103 to 125, and 126 to 148; these read HLTA…IAKL, NLVY…LGNM, SLRE…GRLF, and QLQT…YQDP. The interval 158–555 is nuclease domain; the sequence is MLDNLAVHPE…VNGVHLPNRR (398 aa). E240 is a binding site for Mg(2+). Positions 240, 276, 360, and 365 each coordinate substrate. D410 provides a ligand contact to Mg(2+). D410 (proton donor/acceptor) is an active-site residue. Substrate contacts are provided by N412, N479, and F484.

It belongs to the CCR4/nocturin family. As to quaternary structure, component of the CCR4-NOT complex; distinct complexes seem to exist that differ in the participation of probably mutually exclusive catalytic subunits; the complex contains two deadenylase subunits, CNOT6 or CNOT6L, and CNOT7 or CNOT8. Interacts with CNOT1, CNOT3, CNOT7, CNOT8 and CNOT9. Interacts with TOB1. Interacts with NANOS2. Interacts with ZFP36. Interacts with ZFP36L2. Interacts with RBM46. It depends on Mg(2+) as a cofactor.

It localises to the cytoplasm. The protein localises to the nucleus. It catalyses the reaction Exonucleolytic cleavage of poly(A) to 5'-AMP.. Its function is as follows. Poly(A) nuclease with 3'-5' RNase activity. Catalytic component of the CCR4-NOT complex which is one of the major cellular mRNA deadenylases and is linked to various cellular processes including bulk mRNA degradation, miRNA-mediated repression, translational repression during translational initiation and general transcription regulation. Additional complex functions may be a consequence of its influence on mRNA expression. Involved in mRNA decay mediated by the major-protein-coding determinant of instability (mCRD) of the FOS gene in the cytoplasm. Involved in deadenylation-dependent degradation of CDKN1B mRNA. Its mRNA deadenylase activity can be inhibited by TOB1. Mediates cell proliferation and cell survival and prevents cellular senescence. In Mus musculus (Mouse), this protein is CCR4-NOT transcription complex subunit 6-like (Cnot6l).